The sequence spans 386 residues: Putative gustatory receptor 22b (386 aa).

The Cytoplasmic portion of the chain corresponds to 1-48 (MFGSSREIRPYLARQMLKTTLYGSWLLGIFPFTLDSGKRIRQLRRSRC). A helical transmembrane segment spans residues 49–69 (LTLYGLVLNYFLIFTLIRLAF). Residues 70 to 89 (EYRKHKLEAFKRNPVLEMIN) are Extracellular-facing. A helical membrane pass occupies residues 90–110 (VVIGIINVLSALIVHFMNFWG). Over 111-155 (SRKVGEICNELLILEYQDFEGLNGRNCPNFNCFVIQKCLTILGQL) the chain is Cytoplasmic. A helical membrane pass occupies residues 156-176 (LSFFTLNFALPGLEFHICLVL). The Extracellular segment spans residues 177 to 178 (LS). Residues 179 to 199 (CLMEFSLNLNIMHYHVGVLLI) traverse the membrane as a helical segment. Over 200–254 (YRYVWLINEQLKDLVSQLKLNPETDFSRIHQFLSLYKRLLELNRKLVIAYEYQMT) the chain is Cytoplasmic. Residues 255-275 (LFIIAQLSGNIVVIYFLIVYG) traverse the membrane as a helical segment. Topologically, residues 276–282 (LSMRTYS) are extracellular. The helical transmembrane segment at 283–303 (IFLVAFPNSLLINIWDFWLCI) threads the bilayer. At 304-363 (AACDLTEKAGDETAIILKIFSDLEHRDDKLEMSVNEFAWLCSHRKFRFQLCGLFSMNCRM) the chain is on the cytoplasmic side. Residues 364 to 384 (GFKMIITTFLYLVYLVQFDYM) form a helical membrane-spanning segment. Over 385-386 (NL) the chain is Extracellular.

The protein belongs to the insect chemoreceptor superfamily. Gustatory receptor (GR) family. Gr22e subfamily. In terms of tissue distribution, expressed in taste bristles in the foreleg and labial palps. In larvae, is expressed in neurons of the dorsal and posterior pharyngeal sense organs. Expressed in taste neurons that mediate sensitivity to bitter compounds.

The protein localises to the cell membrane. In terms of biological role, probable gustatory receptor which mediates acceptance or avoidance behavior, depending on its substrates. Seems to be involved in the sensing of bitter taste since it is expressed in neurons that mediate sensitivity to bitter compounds. The sequence is that of Putative gustatory receptor 22b from Drosophila melanogaster (Fruit fly).